A 262-amino-acid polypeptide reads, in one-letter code: Apolipoprotein A-I (262 aa).

The signal sequence occupies residues 1–18 (MKAVVLTLAVLFLTGSQA). Tandem repeats lie at residues 67-88 (LKLLDNWDTLASTLSKVREQLG) and 89-110 (PVTQEFWDNLEKETAALRQEMN). The 10 X approximate tandem repeats stretch occupies residues 67-262 (LKLLDNWDTL…DEASKKLNAQ (196 aa)). Position 109 is a methionine sulfoxide (Met109). Residues 111–121 (KDLEEVKQKVQ) form a 3; half-length repeat. A run of 5 repeats spans residues 122-142 (PYLDEFQRKWHEEVEIYRQKV), 144-165 (PLGEEFREGARQKVQELQDRLS), 166-184 (PLAQELRDRARAHVEKQLA), 185-206 (PYSDDLRQRLTARLEALKEGGG), and 207-227 (SLAEYHAKATEQLKALGEKAK). A 9; half-length repeat occupies 228–238 (PALEDLRQGLM). Methionine sulfoxide is present on Met238. Copy 10 of the repeat occupies 239-262 (PVLESLKVSILAAIDEASKKLNAQ).

The protein belongs to the apolipoprotein A1/A4/E family. Homodimer. Interacts with APOA1BP and CLU. Component of a sperm activating protein complex (SPAP), consisting of APOA1, an immunoglobulin heavy chain, an immunoglobulin light chain and albumin. Interacts with NDRG1. Interacts with SCGB3A2. Interacts with NAXE and YJEFN3. Glycosylated. In terms of processing, palmitoylated. Post-translationally, phosphorylation sites are present in the extracellular medium. As to expression, major protein of plasma HDL, also found in chylomicrons.

The protein localises to the secreted. Its function is as follows. Participates in the reverse transport of cholesterol from tissues to the liver for excretion by promoting cholesterol efflux from tissues and by acting as a cofactor for the lecithin cholesterol acyltransferase (LCAT). As part of the SPAP complex, activates spermatozoa motility. This is Apolipoprotein A-I (APOA1) from Pantholops hodgsonii (Chiru).